A 1969-amino-acid polypeptide reads, in one-letter code: Protein mono-ADP-ribosyltransferase PARP4 (1969 aa).

In terms of domain architecture, BRCT spans 1-94 (MTLGIFANCI…RLLDVRNYDP (94 aa)). Positions 19 to 25 (PRQQKKK) match the Nuclear localization signal motif. The disordered stretch occupies residues 92–132 (YDPLSPAPAAPPAERSRSEVQSEYLPSDNTPEKENTEVTEV). The PARP alpha-helical domain maps to 235–363 (SEKLQALLLE…ETNLSKPNPP (129 aa)). One can recognise a PARP catalytic domain in the interval 362–566 (PPSLAKYRAL…FCTPGDQIKE (205 aa)). The 129-residue stretch at 600–728 (TNIKAGLQDA…KVLIKITYIT (129 aa)) folds into the VIT domain. The 171-residue stretch at 869 to 1039 (EVIICLDCSS…KQIEAQMTRI (171 aa)) folds into the VWFA domain. Ser1229 is modified (phosphoserine). The Nuclear localization signal motif lies at 1230 to 1242 (DGHGVLQPVSVSS). Pro residues-rich tracts occupy residues 1372-1387 (PPHP…PLPL), 1402-1417 (HPPP…PPPS), 1425-1444 (LPPP…PPIP), 1485-1513 (LPPP…PPPS), and 1521-1540 (LPPP…PPIP). The segment at 1372-1608 (PPHPLGGTHP…AGTQFSLSPI (237 aa)) is disordered. An FH1 domain is found at 1443-1541 (IPGGTLIPPS…HIPPPPPIPG (99 aa)). Residues 1541 to 1556 (GGTLIPSPSSLFGGTH) are compositionally biased toward low complexity. Residues 1557–1585 (LPPPPLLPAGTHIPPPPPITGSTHPPPPS) show a composition bias toward pro residues. Residues 1808–1969 (FCDEDQESPV…LHRILYYSQG (162 aa)) are interaction with the major vault protein.

The protein belongs to the ARTD/PARP family. In terms of assembly, component of the vault ribonucleoprotein particle, at least composed of MVP, PARP4 and one or more vault RNAs (vRNAs). Interacts with TEP1.

It is found in the cytoplasm. It localises to the nucleus. The enzyme catalyses L-aspartyl-[protein] + NAD(+) = 4-O-(ADP-D-ribosyl)-L-aspartyl-[protein] + nicotinamide. It catalyses the reaction L-glutamyl-[protein] + NAD(+) = 5-O-(ADP-D-ribosyl)-L-glutamyl-[protein] + nicotinamide. Mono-ADP-ribosyltransferase that mediates mono-ADP-ribosylation of target proteins. The polypeptide is Protein mono-ADP-ribosyltransferase PARP4 (Mus musculus (Mouse)).